The sequence spans 188 residues: Methionine aminopeptidase (188 aa).

H60 is a binding site for substrate. D80, D91, and H164 together coordinate a divalent metal cation. H172 contributes to the substrate binding site.

Belongs to the peptidase M24A family. Methionine aminopeptidase archaeal type 2 subfamily. As to quaternary structure, monomer. Co(2+) serves as cofactor. It depends on Zn(2+) as a cofactor. The cofactor is Mn(2+). Requires Fe(2+) as cofactor.

The catalysed reaction is Release of N-terminal amino acids, preferentially methionine, from peptides and arylamides.. In terms of biological role, removes the N-terminal methionine from nascent proteins. The N-terminal methionine is often cleaved when the second residue in the primary sequence is small and uncharged (Met-Ala-, Cys, Gly, Pro, Ser, Thr, or Val). The polypeptide is Methionine aminopeptidase (map) (Methanothermus fervidus).